Reading from the N-terminus, the 194-residue chain is Ras-related protein RabU (194 aa).

19–27 (GYDYECGIK) provides a ligand contact to GTP. The Effector region motif lies at 42-50 (PESQVGVDF). GTP is bound by residues 68-72 (PQNKY) and 130-133 (NNSE).

This sequence belongs to the small GTPase superfamily. Rab family.

The sequence is that of Ras-related protein RabU (rabU) from Dictyostelium discoideum (Social amoeba).